The primary structure comprises 398 residues: Chalcone synthase 1 (398 aa).

CoA is bound at residue 58 to 65 (KFKRMCDK). Cysteine 167 acts as the Acyl-thioester intermediate in catalysis. Residues threonine 200 and 219–220 (GD) contribute to the substrate site. Residue alanine 311 coordinates CoA.

The protein belongs to the thiolase-like superfamily. Chalcone/stilbene synthases family. As to quaternary structure, homodimer.

The catalysed reaction is (E)-4-coumaroyl-CoA + 3 malonyl-CoA + 3 H(+) = 2',4,4',6'-tetrahydroxychalcone + 3 CO2 + 4 CoA. It participates in secondary metabolite biosynthesis; flavonoid biosynthesis. Functionally, the primary product of this enzyme is 4,2',4',6'-tetrahydroxychalcone (also termed naringenin-chalcone or chalcone) which can under specific conditions spontaneously isomerize into naringenin. This Oryza sativa subsp. indica (Rice) protein is Chalcone synthase 1 (CHS1).